A 330-amino-acid chain; its full sequence is Fructose-1,6-bisphosphatase class 1 (330 aa).

Mg(2+) is bound by residues E78, D97, L99, and D100. Substrate contacts are provided by residues 100-103 (DGSS) and N188. E260 serves as a coordination point for Mg(2+).

The protein belongs to the FBPase class 1 family. Homotetramer. Mg(2+) serves as cofactor.

The protein resides in the cytoplasm. It carries out the reaction beta-D-fructose 1,6-bisphosphate + H2O = beta-D-fructose 6-phosphate + phosphate. It participates in carbohydrate biosynthesis; gluconeogenesis. This is Fructose-1,6-bisphosphatase class 1 from Paracoccus denitrificans (strain Pd 1222).